A 232-amino-acid polypeptide reads, in one-letter code: Dehydrogenase OXI1 (232 aa).

Residues 1–20 (MTETFKVAITFVSPSSEALA) form the signal peptide. Residue Leu-19 coordinates NADP(+). Asn-28 carries N-linked (GlcNAc...) asparagine glycosylation. Positions 42, 70, and 103 each coordinate NADP(+). Residue Asn-117 is glycosylated (N-linked (GlcNAc...) asparagine). Residues Ser-119 and Ser-121 each act as proton donor in the active site. NADP(+) contacts are provided by Tyr-133, Lys-137, and Thr-168. The Proton acceptor role is filled by Tyr-133. The Lowers pKa of active site Tyr role is filled by Lys-137.

Belongs to the short-chain dehydrogenases/reductases (SDR) family.

It catalyses the reaction a primary alcohol + NAD(+) = an aldehyde + NADH + H(+). The enzyme catalyses a secondary alcohol + NAD(+) = a ketone + NADH + H(+). The protein operates within mycotoxin biosynthesis. Functionally, dehydrogenase; part of the Tox1A locus, one of the 2 loci that mediate the biosynthesis of T-toxin, a family of linear polyketides 37 to 45 carbons in length, of which the major component is 41 carbons, and which leads to high virulence to maize. One of the PKSs (PKS1 or PKS2) could synthesize a precursor, used subsequently by the other PKS as starter unit, to add additional carbons. Variability in the length of the final carbon backbone C35-47 could be achieved by varying the number of condensation cycles, or use of different starter or extender units or might be due to decarboxylation of the penultimate product, catalyzed by DEC1. Additional proteins are required for the biosynthesis of T-toxin, including oxidoreductases RED1, RED2, RED3, LAM1 and OXI1, as well as esterase TOX9. The sequence is that of Dehydrogenase OXI1 from Cochliobolus heterostrophus (strain C4 / ATCC 48331 / race T) (Southern corn leaf blight fungus).